We begin with the raw amino-acid sequence, 142 residues long: uncharacterized protein (142 aa).

The Peptidase C39 domain occupies 18 to 137 (QSRSYSCGPA…RIFTGNVLVV (120 aa)).

This is an uncharacterized protein from Methanothermobacter thermautotrophicus (strain ATCC 29096 / DSM 1053 / JCM 10044 / NBRC 100330 / Delta H) (Methanobacterium thermoautotrophicum).